A 183-amino-acid polypeptide reads, in one-letter code: Protein CT_584 (183 aa).

Belongs to the chlamydial CPn_0803/CT_584/TC_0873 family.

The chain is Protein CT_584 from Chlamydia trachomatis serovar D (strain ATCC VR-885 / DSM 19411 / UW-3/Cx).